The chain runs to 82 residues: Small ribosomal subunit protein bS18 (82 aa).

It belongs to the bacterial ribosomal protein bS18 family. In terms of assembly, part of the 30S ribosomal subunit. Forms a tight heterodimer with protein bS6.

Binds as a heterodimer with protein bS6 to the central domain of the 16S rRNA, where it helps stabilize the platform of the 30S subunit. The polypeptide is Small ribosomal subunit protein bS18 (Methylobacterium nodulans (strain LMG 21967 / CNCM I-2342 / ORS 2060)).